The primary structure comprises 792 residues: Protocadherin beta-18 (792 aa).

An N-terminal signal peptide occupies residues Met-1–Ala-26. 6 Cadherin domains span residues Gly-27–Phe-133, Gln-134–Phe-242, Pro-243–Leu-347, Ile-348–Phe-451, Asn-452–Val-561, and Ala-568–Val-676. Asn-169 carries N-linked (GlcNAc...) asparagine glycosylation. Asn-418 and Asn-452 each carry an N-linked (GlcNAc...) asparagine glycan. A helical transmembrane segment spans residues Val-693–Val-713.

Its subcellular location is the cell membrane. Its function is as follows. Potential calcium-dependent cell-adhesion protein. In Mus musculus (Mouse), this protein is Protocadherin beta-18 (Pcdhb18).